Reading from the N-terminus, the 258-residue chain is Probable dihydroorotate dehydrogenase B (NAD(+)), electron transfer subunit (258 aa).

The region spanning 1-90 (MRPISATIKE…RGPYGNGWEI (90 aa)) is the FAD-binding FR-type domain. Residues cysteine 210, cysteine 215, cysteine 218, and cysteine 228 each coordinate [2Fe-2S] cluster.

This sequence belongs to the PyrK family. In terms of assembly, heterotetramer of 2 PyrK and 2 PyrD type B subunits. Requires [2Fe-2S] cluster as cofactor. FAD serves as cofactor.

Its pathway is pyrimidine metabolism; UMP biosynthesis via de novo pathway; orotate from (S)-dihydroorotate (NAD(+) route): step 1/1. Its function is as follows. Responsible for channeling the electrons from the oxidation of dihydroorotate from the FMN redox center in the PyrD type B subunit to the ultimate electron acceptor NAD(+). This chain is Probable dihydroorotate dehydrogenase B (NAD(+)), electron transfer subunit, found in Methanocella arvoryzae (strain DSM 22066 / NBRC 105507 / MRE50).